The primary structure comprises 143 residues: Endoribonuclease YbeY (143 aa).

Zn(2+)-binding residues include His109, His113, and His119.

The protein belongs to the endoribonuclease YbeY family. Zn(2+) is required as a cofactor.

It is found in the cytoplasm. Single strand-specific metallo-endoribonuclease involved in late-stage 70S ribosome quality control and in maturation of the 3' terminus of the 16S rRNA. In Neorickettsia sennetsu (strain ATCC VR-367 / Miyayama) (Ehrlichia sennetsu), this protein is Endoribonuclease YbeY.